We begin with the raw amino-acid sequence, 611 residues long: Large ribosomal subunit assembly factor BipA (611 aa).

The tr-type G domain occupies 7 to 202 (KNLRNIAIIA…AIVKYTPPPT (196 aa)). GTP-binding positions include 19 to 24 (DHGKTT) and 132 to 135 (NKID).

Belongs to the TRAFAC class translation factor GTPase superfamily. Classic translation factor GTPase family. BipA subfamily. In terms of assembly, monomer.

Its subcellular location is the cytoplasm. The enzyme catalyses GTP + H2O = GDP + phosphate + H(+). A 50S ribosomal subunit assembly protein with GTPase activity, required for 50S subunit assembly at low temperatures, may also play a role in translation. Binds GTP and analogs. Binds the 70S ribosome between the 30S and 50S subunits, in a similar position as ribosome-bound EF-G; it contacts a number of ribosomal proteins, both rRNAs and the A-site tRNA. This chain is Large ribosomal subunit assembly factor BipA, found in Buchnera aphidicola subsp. Baizongia pistaciae (strain Bp).